Reading from the N-terminus, the 523-residue chain is MASQDQNTGTTHVELQGGENSKKLFSKYDLWSKAMDEKKLSSSLFTVNDTQEFLELCEACRRGDLEVVKSLVENYNTPINQVDQFDYSPLVLASLCGHEPVVKFLLENGALCERDTFQGERCLYGALNDNIRRMLLSYDITKAIDESQPYASHITSLLSNSALHFTTDIVFAGQYGRVFAHKFYLAARSSYFKSKFSKLGPSEHEIEVKHFAKEFESILRYLYLDTNAVFTKQYNNALLSIGKKFQLNDFIALYEKDREQLHSRDWKKIQLAKTQNDLGEFLDYIISNYKVPIESLNQPSDQYSFHDAYLQSYTHRYPVHRAIMCRCEYFLDMLAGPFLESNQELPVLSLPFSSSVVEIVLKFLYTDKTDIAPELALDVVYVADMLSLDKDRSLKSLASIVITKQEEPIDSIYDILRTAWDTSTPRLEQYASEYMANHLEHLIDDPEFCELVKESADRILQRQETDTIELIDDIRYFLSKRFGIYHEDLCIDGVVDTLTPYESEYNQKMEMIDDLLDKLELQA.

Residues 85 to 114 (FDYSPLVLASLCGHEPVVKFLLENGALCER) form an ANK repeat. 2 consecutive BTB domains span residues 167–223 (TDIV…RYLY) and 306–373 (HDAY…DIAP).

In terms of assembly, interacts with cul3. In terms of processing, ubiquitinated and targeted for cul3-dependent degradation.

It is found in the cytoplasm. It functions in the pathway protein modification; protein ubiquitination. Probable substrate-specific adapter of an E3 ubiquitin-protein ligase complex which mediates the ubiquitination and subsequent proteasomal degradation of target proteins. In Schizosaccharomyces pombe (strain 972 / ATCC 24843) (Fission yeast), this protein is BTB/POZ domain-containing protein 3 (btb3).